Consider the following 192-residue polypeptide: Crossover junction endodeoxyribonuclease RuvC (192 aa).

Active-site residues include Asp-8, Glu-67, and Asp-139. Mg(2+) is bound by residues Asp-8, Glu-67, and Asp-139.

This sequence belongs to the RuvC family. Homodimer which binds Holliday junction (HJ) DNA. The HJ becomes 2-fold symmetrical on binding to RuvC with unstacked arms; it has a different conformation from HJ DNA in complex with RuvA. In the full resolvosome a probable DNA-RuvA(4)-RuvB(12)-RuvC(2) complex forms which resolves the HJ. Mg(2+) serves as cofactor.

The protein localises to the cytoplasm. It carries out the reaction Endonucleolytic cleavage at a junction such as a reciprocal single-stranded crossover between two homologous DNA duplexes (Holliday junction).. The RuvA-RuvB-RuvC complex processes Holliday junction (HJ) DNA during genetic recombination and DNA repair. Endonuclease that resolves HJ intermediates. Cleaves cruciform DNA by making single-stranded nicks across the HJ at symmetrical positions within the homologous arms, yielding a 5'-phosphate and a 3'-hydroxyl group; requires a central core of homology in the junction. The consensus cleavage sequence is 5'-(A/T)TT(C/G)-3'. Cleavage occurs on the 3'-side of the TT dinucleotide at the point of strand exchange. HJ branch migration catalyzed by RuvA-RuvB allows RuvC to scan DNA until it finds its consensus sequence, where it cleaves and resolves the cruciform DNA. This is Crossover junction endodeoxyribonuclease RuvC from Haemophilus ducreyi (strain 35000HP / ATCC 700724).